Reading from the N-terminus, the 361-residue chain is Phosphoserine aminotransferase (361 aa).

Arginine 42 contributes to the L-glutamate binding site. Residues 76–77 (AR), tryptophan 102, threonine 153, aspartate 173, and glutamine 196 contribute to the pyridoxal 5'-phosphate site. At lysine 197 the chain carries N6-(pyridoxal phosphate)lysine. 238–239 (NT) is a pyridoxal 5'-phosphate binding site.

Belongs to the class-V pyridoxal-phosphate-dependent aminotransferase family. SerC subfamily. In terms of assembly, homodimer. The cofactor is pyridoxal 5'-phosphate.

Its subcellular location is the cytoplasm. The catalysed reaction is O-phospho-L-serine + 2-oxoglutarate = 3-phosphooxypyruvate + L-glutamate. The enzyme catalyses 4-(phosphooxy)-L-threonine + 2-oxoglutarate = (R)-3-hydroxy-2-oxo-4-phosphooxybutanoate + L-glutamate. Its pathway is amino-acid biosynthesis; L-serine biosynthesis; L-serine from 3-phospho-D-glycerate: step 2/3. It functions in the pathway cofactor biosynthesis; pyridoxine 5'-phosphate biosynthesis; pyridoxine 5'-phosphate from D-erythrose 4-phosphate: step 3/5. Functionally, catalyzes the reversible conversion of 3-phosphohydroxypyruvate to phosphoserine and of 3-hydroxy-2-oxo-4-phosphonooxybutanoate to phosphohydroxythreonine. This chain is Phosphoserine aminotransferase, found in Buchnera aphidicola subsp. Acyrthosiphon pisum (strain Tuc7).